Here is a 342-residue protein sequence, read N- to C-terminus: uncharacterized protein (342 aa).

A run of 3 helical transmembrane segments spans residues 35 to 55 (YFRVSLVLLTLLIISLVWCFS), 134 to 154 (LLFLPSSVLSLSLIFSLIIYF), and 161 to 180 (LFITRCNSTLYLFNIYYCFS). Disordered regions lie at residues 198–220 (SSDNYSNYQQQPQQQPQQQQQYN) and 311–342 (IINNNNNNNNNNNINNSAYSNFNNSNGYNYTN).

Its subcellular location is the membrane. This is an uncharacterized protein from Dictyostelium discoideum (Social amoeba).